Here is a 278-residue protein sequence, read N- to C-terminus: FALAHMVNDFDIMKSYLDEGANGIETDITFSPEGEPESAFHGVPCDCKRWCDRTVSFDSYLQKTSDLSTPGHPDYRENLLIIILDLKLNGLSQDALANGGRRLADKLAAHFWTGGRRDQRATFVVSVPQTSQKVFMKTFREEMEAIGMGDMNAKVGFDFTDNGDVSVTKAVYDELGITEHIWASDGITNCVALLFRGTSRLEELIQKRDEGESTYISKVYAWTYDKETSVVLALELGVDGVMTNYADFVISILNKPEHSSKYRLATYEDDPFERFKAV.

Residue His-5 is part of the active site. Mg(2+) contacts are provided by Glu-25 and Asp-27. His-41 functions as the Nucleophile in the catalytic mechanism. Cystine bridges form between Cys-45/Cys-51 and Cys-47/Cys-190. A Mg(2+)-binding site is contributed by Asp-85.

It belongs to the arthropod phospholipase D family. Class II subfamily. The cofactor is Mg(2+). As to expression, expressed by the venom gland.

It is found in the secreted. It carries out the reaction an N-(acyl)-sphingosylphosphocholine = an N-(acyl)-sphingosyl-1,3-cyclic phosphate + choline. The enzyme catalyses an N-(acyl)-sphingosylphosphoethanolamine = an N-(acyl)-sphingosyl-1,3-cyclic phosphate + ethanolamine. The catalysed reaction is a 1-acyl-sn-glycero-3-phosphocholine = a 1-acyl-sn-glycero-2,3-cyclic phosphate + choline. It catalyses the reaction a 1-acyl-sn-glycero-3-phosphoethanolamine = a 1-acyl-sn-glycero-2,3-cyclic phosphate + ethanolamine. Functionally, dermonecrotic toxins cleave the phosphodiester linkage between the phosphate and headgroup of certain phospholipids (sphingolipid and lysolipid substrates), forming an alcohol (often choline) and a cyclic phosphate. This toxin acts on sphingomyelin (SM). It may also act on ceramide phosphoethanolamine (CPE), lysophosphatidylcholine (LPC) and lysophosphatidylethanolamine (LPE), but not on lysophosphatidylserine (LPS), and lysophosphatidylglycerol (LPG). It acts by transphosphatidylation, releasing exclusively cyclic phosphate products as second products. Induces dermonecrosis, hemolysis, increased vascular permeability, edema, inflammatory response, and platelet aggregation. This Loxosceles spinulosa (Recluse spider) protein is Dermonecrotic toxin LspiSicTox-betaIE2ii.